Here is a 578-residue protein sequence, read N- to C-terminus: Proline--tRNA ligase (578 aa).

The protein belongs to the class-II aminoacyl-tRNA synthetase family. ProS type 1 subfamily. Homodimer.

It is found in the cytoplasm. It carries out the reaction tRNA(Pro) + L-proline + ATP = L-prolyl-tRNA(Pro) + AMP + diphosphate. Catalyzes the attachment of proline to tRNA(Pro) in a two-step reaction: proline is first activated by ATP to form Pro-AMP and then transferred to the acceptor end of tRNA(Pro). As ProRS can inadvertently accommodate and process non-cognate amino acids such as alanine and cysteine, to avoid such errors it has two additional distinct editing activities against alanine. One activity is designated as 'pretransfer' editing and involves the tRNA(Pro)-independent hydrolysis of activated Ala-AMP. The other activity is designated 'posttransfer' editing and involves deacylation of mischarged Ala-tRNA(Pro). The misacylated Cys-tRNA(Pro) is not edited by ProRS. The sequence is that of Proline--tRNA ligase from Burkholderia multivorans (strain ATCC 17616 / 249).